Reading from the N-terminus, the 598-residue chain is Dihydroxy-acid dehydratase astD, mitochondrial (598 aa).

The transit peptide at 1–111 (MFASRIRSRA…HRAGLVPMRF (111 aa)) directs the protein to the mitochondrion. Positions 23 to 50 (RLPASTTGRRYKSDETLNRVSSKITQPK) are disordered. Polar residues predominate over residues 40–50 (NRVSSKITQPK). Residue Cys-86 coordinates [2Fe-2S] cluster. Residue Asp-118 coordinates Mg(2+). A [2Fe-2S] cluster-binding site is contributed by Cys-159. Asp-160 lines the Mg(2+) pocket. Cys-232 contributes to the [2Fe-2S] cluster binding site. Glu-485 contacts Mg(2+). Residue Ser-511 is the Proton acceptor of the active site.

The protein belongs to the IlvD/Edd family. [2Fe-2S] cluster is required as a cofactor. Requires Mg(2+) as cofactor.

The protein localises to the mitochondrion. It carries out the reaction (2R)-2,3-dihydroxy-3-methylbutanoate = 3-methyl-2-oxobutanoate + H2O. It catalyses the reaction (2R,3R)-2,3-dihydroxy-3-methylpentanoate = (S)-3-methyl-2-oxopentanoate + H2O. The protein operates within amino-acid biosynthesis; L-isoleucine biosynthesis; L-isoleucine from 2-oxobutanoate: step 3/4. Its pathway is amino-acid biosynthesis; L-valine biosynthesis; L-valine from pyruvate: step 3/4. DHAD activity is not inhibited by the dihydroxyacid dehydratase inhibitor aspterric acid (AA). In terms of biological role, dihydroxyacid dehydratase; part of the gene cluster that mediates the biosynthesis of the sesquiterpenoid aspterric acid (AA), an inhibitor of dihydroxy-acid dehydratase (DHAD) effective as an herbicide. Performs the third step in the common pathway leading to biosynthesis of branched-chain amino acids. Catalyzes the dehydration of (2R,3R)-2,3-dihydroxy-3-methylpentanoate (2,3-dihydroxy-3-methylvalerate) into 2-oxo-3-methylpentanoate (2-oxo-3-methylvalerate) and of (2R)-2,3-dihydroxy-3-methylbutanoate (2,3-dihydroxyisovalerate) into 2-oxo-3-methylbutanoate (2-oxoisovalerate), the penultimate precursor to L-isoleucine and L-valine, respectively. AstD confers self-resistance in the presence of the dihydroxyacid dehydratase inhibitor aspterric acid (AA) produced by the ast cluster. The sequence is that of Dihydroxy-acid dehydratase astD, mitochondrial from Aspergillus terreus (strain NIH 2624 / FGSC A1156).